The primary structure comprises 459 residues: Phosphomethylpyrimidine synthase (459 aa).

Residues N80, M109, Y139, H175, 195–197, 236–239, and E275 contribute to the substrate site; these read SRG and DSLR. Position 279 (H279) interacts with Zn(2+). Y302 is a substrate binding site. H343 contributes to the Zn(2+) binding site. The [4Fe-4S] cluster site is built by C423, C426, and C431.

Belongs to the ThiC family. Requires [4Fe-4S] cluster as cofactor.

It catalyses the reaction 5-amino-1-(5-phospho-beta-D-ribosyl)imidazole + S-adenosyl-L-methionine = 4-amino-2-methyl-5-(phosphooxymethyl)pyrimidine + CO + 5'-deoxyadenosine + formate + L-methionine + 3 H(+). It functions in the pathway cofactor biosynthesis; thiamine diphosphate biosynthesis. Catalyzes the synthesis of the hydroxymethylpyrimidine phosphate (HMP-P) moiety of thiamine from aminoimidazole ribotide (AIR) in a radical S-adenosyl-L-methionine (SAM)-dependent reaction. The polypeptide is Phosphomethylpyrimidine synthase (Prochlorococcus marinus (strain MIT 9211)).